The following is a 308-amino-acid chain: Glutaminase (308 aa).

The substrate site is built by Ser-66, Asn-117, Glu-161, Asn-168, Tyr-192, Tyr-244, and Val-262.

This sequence belongs to the glutaminase family. Homotetramer.

The enzyme catalyses L-glutamine + H2O = L-glutamate + NH4(+). In Yersinia pestis bv. Antiqua (strain Nepal516), this protein is Glutaminase.